Reading from the N-terminus, the 138-residue chain is Basic phospholipase A2 homolog Tbo-K49 (138 aa).

Residues 1 to 16 form the signal peptide; that stretch reads MRTLWIMAVLLVGVEG. 6 disulfides stabilise this stretch: cysteine 42-cysteine 131, cysteine 44-cysteine 60, cysteine 59-cysteine 111, cysteine 65-cysteine 138, cysteine 66-cysteine 104, and cysteine 91-cysteine 102. The important for membrane-damaging activities in eukaryotes and bacteria; heparin-binding stretch occupies residues 121–133; it reads KKERINTKIFCKK.

Monomer. As to expression, expressed by the venom gland.

It is found in the secreted. In terms of biological role, snake venom phospholipase A2 homolog that lacks catalytic activity. It induces local edema. Is myotoxic. A model of myotoxic mechanism has been proposed: an apo Lys49-PLA2 is activated by the entrance of a hydrophobic molecule (e.g. fatty acid) at the hydrophobic channel of the protein leading to a reorientation of a monomer. This reorientation causes a transition between 'inactive' to 'active' states, causing alignment of C-terminal and membrane-docking sites (MDoS) side-by-side and putting the membrane-disruption sites (MDiS) in the same plane, exposed to solvent and in a symmetric position for both monomers. The MDoS region stabilizes the toxin on membrane by the interaction of charged residues with phospholipid head groups. Subsequently, the MDiS region destabilizes the membrane with penetration of hydrophobic residues. This insertion causes a disorganization of the membrane, allowing an uncontrolled influx of ions (i.e. calcium and sodium), and eventually triggering irreversible intracellular alterations and cell death. The polypeptide is Basic phospholipase A2 homolog Tbo-K49 (Craspedocephalus borneensis (Borneo pit viper)).